Reading from the N-terminus, the 667-residue chain is 1-deoxy-D-xylulose-5-phosphate synthase (667 aa).

Thiamine diphosphate is bound by residues histidine 73 and 113–115 (SHA). Aspartate 145 serves as a coordination point for Mg(2+). Thiamine diphosphate contacts are provided by residues 146–147 (GA), asparagine 175, tyrosine 297, and glutamate 379. Asparagine 175 is a binding site for Mg(2+).

It belongs to the transketolase family. DXPS subfamily. As to quaternary structure, homodimer. It depends on Mg(2+) as a cofactor. Thiamine diphosphate is required as a cofactor.

It catalyses the reaction D-glyceraldehyde 3-phosphate + pyruvate + H(+) = 1-deoxy-D-xylulose 5-phosphate + CO2. It functions in the pathway metabolic intermediate biosynthesis; 1-deoxy-D-xylulose 5-phosphate biosynthesis; 1-deoxy-D-xylulose 5-phosphate from D-glyceraldehyde 3-phosphate and pyruvate: step 1/1. Functionally, catalyzes the acyloin condensation reaction between C atoms 2 and 3 of pyruvate and glyceraldehyde 3-phosphate to yield 1-deoxy-D-xylulose-5-phosphate (DXP). The sequence is that of 1-deoxy-D-xylulose-5-phosphate synthase from Kocuria rhizophila (strain ATCC 9341 / DSM 348 / NBRC 103217 / DC2201).